Consider the following 97-residue polypeptide: Sugar transporter SemiSWEET (97 aa).

One can recognise a PQ-loop domain in the interval 4 to 70; it reads IERIGKALEP…IYGIYHKNPT (67 aa). 3 helical membrane-spanning segments follow: residues 15 to 35, 44 to 65, and 71 to 91; these read MLVMGLISPLATMPQLYKLYV, LSLTTWLLYSFIALLWTIYGIY, and IWVGNCLGFLMYVAMVVGIIA.

As to quaternary structure, homodimer.

It is found in the cell membrane. In terms of biological role, the homodimer mediates transmembrane sugar transport down a concentration gradient. Transport is probably effected by rocking-type movements, where a cargo-binding cavity opens first on one and then on the other side of the membrane. The chain is Sugar transporter SemiSWEET from Vibrio sp. (strain N418).